The following is a 243-amino-acid chain: 1-(5-phosphoribosyl)-5-[(5-phosphoribosylamino)methylideneamino] imidazole-4-carboxamide isomerase (243 aa).

Asp8 functions as the Proton acceptor in the catalytic mechanism. The active-site Proton donor is Asp129.

It belongs to the HisA/HisF family.

The protein resides in the cytoplasm. The enzyme catalyses 1-(5-phospho-beta-D-ribosyl)-5-[(5-phospho-beta-D-ribosylamino)methylideneamino]imidazole-4-carboxamide = 5-[(5-phospho-1-deoxy-D-ribulos-1-ylimino)methylamino]-1-(5-phospho-beta-D-ribosyl)imidazole-4-carboxamide. Its pathway is amino-acid biosynthesis; L-histidine biosynthesis; L-histidine from 5-phospho-alpha-D-ribose 1-diphosphate: step 4/9. The sequence is that of 1-(5-phosphoribosyl)-5-[(5-phosphoribosylamino)methylideneamino] imidazole-4-carboxamide isomerase from Geobacter sp. (strain M21).